The following is a 1021-amino-acid chain: Inversin (1021 aa).

ANK repeat units follow at residues 7–36 (QNPS…LRDS), 40–69 (FGRT…GINK), 73–102 (SQRT…DWRL), 106–137 (EEMT…EVDT), 141–170 (NKQT…NIGI), 174–206 (EGKI…TESL), 213–243 (EGRT…SVTA), 247–276 (LFRT…SGMI), 281–310 (QGAT…VRDE), 314–343 (EGRT…DIDI), 349–378 (YGGT…MVDP), 382–411 (MKHT…RVDL), 415–444 (DGHS…SPNL), 448–477 (AGRT…DPNI), 481–510 (EGRT…FPNH), and 516–546 (ERYT…SIAA). Positions 483 to 491 (RTALHWSCN) match the D-box 1 motif. The IQ 1 domain occupies 548-577 (QDIAASSIQALYKGYKVRRAFRERKKLLMR). Composition is skewed to basic and acidic residues over residues 579–598 (EQLR…REAE) and 653–669 (SRRE…REPE). 3 disordered regions span residues 579–602 (EQLR…QQLS), 632–691 (KDSV…KKCP), and 704–868 (GPDT…GTCS). Positions 722–731 (PAGSSRPGSA) are enriched in low complexity. 2 stretches are compositionally biased toward polar residues: residues 759 to 781 (GAHS…TSKG) and 791 to 802 (TGSQPSNNTSVT). Positions 803 to 866 (RQKEKRQEKE…KEKEKKKDGT (64 aa)) are enriched in basic and acidic residues. A D-box 2 motif is present at residues 862-870 (KKDGTCSKN). Positions 869–898 (KNQAAVVIQRAWRRSCVRGRIRKVLCRSLK) constitute an IQ 2 domain.

Binds calmodulin via its IQ domains.

Its subcellular location is the cytoplasm. The protein resides in the cytoskeleton. In terms of biological role, required for normal renal development and establishment of left-right axis. Probably acts as a molecular switch between different Wnt signaling pathways. Inhibits the canonical Wnt pathway by targeting cytoplasmic disheveled for degradation by the ubiquitin-proteasome. This suggests that it is required in renal development to oppose the repression of terminal differentiation of tubular epithelial cells by Wnt signaling. The sequence is that of Inversin (invs) from Danio rerio (Zebrafish).